The following is a 359-amino-acid chain: Splicing factor 3B subunit 4 (359 aa).

2 RRM domains span residues 13–91 and 98–176; these read ACLL…KENK and ANLF…YARK. Disordered stretches follow at residues 198–239 and 293–337; these read GYLN…PIVT and QQQQ…PFNP. Composition is skewed to low complexity over residues 202–231 and 293–302; these read QQQQ…QQSQ and QQQQQQQQQQ. Residues 303–312 show a composition bias toward basic residues; that stretch reads HHPHHQHPIP.

The protein belongs to the SF3B4 family. As to quaternary structure, component of splicing factor SF3B which is composed of at least eight subunits.

The protein resides in the nucleus. Its function is as follows. Subunit of the splicing factor SF3B required for 'A' complex assembly formed by the stable binding of U2 snRNP to the branchpoint sequence (BPS) in pre-mRNA. Sequence independent binding of SF3A/SF3B complex upstream of the branch site is essential, it may anchor U2 snRNP to the pre-mRNA. May also be involved in the assembly of the 'E' complex. Has been found in complex 'B' and 'C' as well. In Dictyostelium discoideum (Social amoeba), this protein is Splicing factor 3B subunit 4 (sf3b4).